Here is a 337-residue protein sequence, read N- to C-terminus: Phospholipase A1 1 (337 aa).

The signal sequence occupies residues Met-1 to Ala-21. A propeptide spanning residues Ala-22–Arg-35 is cleaved from the precursor. The cysteines at positions 41 and 124 are disulfide-linked. The Nucleophile role is filled by Ser-174. Asp-202 serves as the catalytic Charge relay system. Cystine bridges form between Cys-213–Cys-218 and Cys-256–Cys-261. The active-site Charge relay system is His-263. 3 cysteine pairs are disulfide-bonded: Cys-278–Cys-305, Cys-279–Cys-330, and Cys-298–Cys-303.

This sequence belongs to the AB hydrolase superfamily. Lipase family. As to expression, expressed by the venom gland.

It is found in the secreted. The enzyme catalyses a 1,2-diacyl-sn-glycero-3-phosphocholine + H2O = a 2-acyl-sn-glycero-3-phosphocholine + a fatty acid + H(+). Catalyzes the hydrolysis of phosphatidylcholine with phospholipase A1 activity. May act as an allergen and induce hemolytic activity. The chain is Phospholipase A1 1 from Polistes dominula (European paper wasp).